The primary structure comprises 390 residues: MLLLILLFFKGLVCHEKSIVGPQPLGWHHPAEAEEPLIFRLLHIASFKNHSWSHSQASAWIGDLQTHGWNSTMGTIQFLKPWSQGDFSKEELKNFEALFRLYFHDFPREVHAFAHQFQFEYPFELQISGGCKNVGKTSENFLNGAYQGSDLLSFQRSSWEPSPGAGSRAQKVCEVLSYYKDITEIVQSLLSSVCPRFLSGLIAAGKSELERQVKPEVWLSRGPSPGRGRLQLVCHVSGFHPKPVWVMWMKGQQEQKGTKTGDIPNADETWYLQATLDVAEREATGLSCRVKHSSLGGHDIIIHWGGYSILLILMYVAVIVTLVTLIVMGSWHRKQSSNRNVLSSYISNPTFPLENDTQCPRSSALQLHSAQESWIKNRILKWKRSLNQFW.

The first 14 residues, 1–14 (MLLLILLFFKGLVC), serve as a signal peptide directing secretion. The propeptide at 15–33 (HEKSIVGPQPLGWHHPAEA) is removed in sCD1e. Asparagine 49 and asparagine 70 each carry an N-linked (GlcNAc...) asparagine glycan. 2 cysteine pairs are disulfide-bonded: cysteine 131–cysteine 194 and cysteine 234–cysteine 288. An Ig-like domain is found at 215-306 (PEVWLSRGPS…GHDIIIHWGG (92 aa)). A helical membrane pass occupies residues 305-325 (GGYSILLILMYVAVIVTLVTL).

Heterodimer with B2M (beta-2-microglobulin). The association with B2M appears to be facilitated by the presence of the propeptide. Mono-ubiquitinated. In terms of processing, proteolytically cleaved in endosomes to yield a soluble form.

Its subcellular location is the golgi apparatus membrane. The protein resides in the early endosome. The protein localises to the late endosome. It localises to the lysosome lumen. In terms of biological role, T-cell surface glycoprotein CD1e, soluble is required for the presentation of glycolipid antigens on the cell surface. The membrane-associated form is not active. This is T-cell surface glycoprotein CD1e, membrane-associated (CD1E) from Cavia porcellus (Guinea pig).